The following is a 541-amino-acid chain: Putative transferase YhbX (541 aa).

Residues 1–60 (MTVFNKFARSFKSHWLLYLSVIVFGITNLVASSGAHMVQRLLFFVLTILVVKRISSLPLR) are Periplasmic-facing. A helical transmembrane segment spans residues 61–81 (LLVAAPFVLLTAADMSISLYS). The Cytoplasmic portion of the chain corresponds to 82–110 (WCTFGTTFNDGFAISVLQSDPDEVAKMLG). The helical transmembrane segment at 111–131 (MYSPYLCAFAFLSLLFLAVII) threads the bilayer. At 132-141 (KYDVSLPTKK) the chain is on the periplasmic side. Residues 142–162 (VTGILLLIVISGSLFSACQFA) traverse the membrane as a helical segment. At 163 to 264 (YKDAKNKNAF…RKQIKLFNQA (102 aa)) the chain is on the cytoplasmic side. Residues 265–285 (ISGAPYTALSVPLSLTADSVL) traverse the membrane as a helical segment. The Periplasmic portion of the chain corresponds to 286–541 (SHDIHNYPDN…QGNPTPEGQG (256 aa)).

Belongs to the phosphoethanolamine transferase family.

It localises to the cell inner membrane. Functionally, there are several lipid A forms in this strain, including a phosphoethanolamine (1-O-P-pEtN) form; overexpression of this gene does not lead to higher levels of the 1-O-P-pEtN form of lipid A. The protein is Putative transferase YhbX (yhbX) of Escherichia coli O157:H7.